The chain runs to 346 residues: Biotin synthase (346 aa).

The region spanning 38–256 is the Radical SAM core domain; sequence QQVQVSTLLS…IAVARIMMPT (219 aa). Positions 53, 57, and 60 each coordinate [4Fe-4S] cluster. 4 residues coordinate [2Fe-2S] cluster: Cys97, Cys128, Cys188, and Arg260.

The protein belongs to the radical SAM superfamily. Biotin synthase family. As to quaternary structure, homodimer. It depends on [4Fe-4S] cluster as a cofactor. The cofactor is [2Fe-2S] cluster.

It carries out the reaction (4R,5S)-dethiobiotin + (sulfur carrier)-SH + 2 reduced [2Fe-2S]-[ferredoxin] + 2 S-adenosyl-L-methionine = (sulfur carrier)-H + biotin + 2 5'-deoxyadenosine + 2 L-methionine + 2 oxidized [2Fe-2S]-[ferredoxin]. Its pathway is cofactor biosynthesis; biotin biosynthesis; biotin from 7,8-diaminononanoate: step 2/2. Its function is as follows. Catalyzes the conversion of dethiobiotin (DTB) to biotin by the insertion of a sulfur atom into dethiobiotin via a radical-based mechanism. This is Biotin synthase from Salmonella gallinarum (strain 287/91 / NCTC 13346).